A 173-amino-acid chain; its full sequence is Globin-like host-protective antigen (173 aa).

Residues 1 to 15 (MRFLLLAAFVAYAYA) form the signal peptide. Residues 25–166 (ALSALDVVPL…FNDEAQKQLA (142 aa)) enclose the Globin domain. Position 114 (histidine 114) interacts with heme b.

The protein belongs to the globin family.

The protein resides in the secreted. It is found in the extracellular space. Functionally, may be a globin and may play a role in oxygen transport. The protein is Globin-like host-protective antigen of Trichostrongylus colubriformis (Black scour worm).